The sequence spans 190 residues: Bifunctional protein PyrR (190 aa).

The PRPP-binding signature appears at 107 to 119; sequence IILVDDVLYSGRT.

It belongs to the purine/pyrimidine phosphoribosyltransferase family. PyrR subfamily.

The catalysed reaction is UMP + diphosphate = 5-phospho-alpha-D-ribose 1-diphosphate + uracil. Regulates the transcription of the pyrimidine nucleotide (pyr) operon in response to exogenous pyrimidines. Its function is as follows. Also displays a weak uracil phosphoribosyltransferase activity which is not physiologically significant. This Corynebacterium diphtheriae (strain ATCC 700971 / NCTC 13129 / Biotype gravis) protein is Bifunctional protein PyrR.